The primary structure comprises 285 residues: Bifunctional protein FolD (285 aa).

NADP(+) is bound by residues 165-167 (GRS), S190, and I231.

The protein belongs to the tetrahydrofolate dehydrogenase/cyclohydrolase family. As to quaternary structure, homodimer.

The enzyme catalyses (6R)-5,10-methylene-5,6,7,8-tetrahydrofolate + NADP(+) = (6R)-5,10-methenyltetrahydrofolate + NADPH. It catalyses the reaction (6R)-5,10-methenyltetrahydrofolate + H2O = (6R)-10-formyltetrahydrofolate + H(+). Its pathway is one-carbon metabolism; tetrahydrofolate interconversion. Its function is as follows. Catalyzes the oxidation of 5,10-methylenetetrahydrofolate to 5,10-methenyltetrahydrofolate and then the hydrolysis of 5,10-methenyltetrahydrofolate to 10-formyltetrahydrofolate. The sequence is that of Bifunctional protein FolD from Alkaliphilus oremlandii (strain OhILAs) (Clostridium oremlandii (strain OhILAs)).